The primary structure comprises 216 residues: Large ribosomal subunit protein uL1z (216 aa).

Belongs to the universal ribosomal protein uL1 family. Interacts with the GTPase NUG2.

The protein is Large ribosomal subunit protein uL1z (RPL10AA) of Arabidopsis thaliana (Mouse-ear cress).